We begin with the raw amino-acid sequence, 62 residues long: Photosystem II reaction center protein Z (62 aa).

Helical transmembrane passes span 8–28 (SVFALVAISFLLVVGVPVVLA) and 41–61 (FSGASLWIALVFLVGVLNSFI).

Belongs to the PsbZ family. As to quaternary structure, PSII is composed of 1 copy each of membrane proteins PsbA, PsbB, PsbC, PsbD, PsbE, PsbF, PsbH, PsbI, PsbJ, PsbK, PsbL, PsbM, PsbT, PsbY, PsbZ, Psb30/Ycf12, at least 3 peripheral proteins of the oxygen-evolving complex and a large number of cofactors. It forms dimeric complexes.

The protein localises to the plastid. It localises to the chloroplast thylakoid membrane. Its function is as follows. May control the interaction of photosystem II (PSII) cores with the light-harvesting antenna, regulates electron flow through the 2 photosystem reaction centers. PSII is a light-driven water plastoquinone oxidoreductase, using light energy to abstract electrons from H(2)O, generating a proton gradient subsequently used for ATP formation. In Chaetosphaeridium globosum (Charophycean green alga), this protein is Photosystem II reaction center protein Z.